A 518-amino-acid chain; its full sequence is Putative ribose/galactose/methyl galactoside import ATP-binding protein (518 aa).

The tract at residues 1 to 22 (MSIAVLDRPMSRQDTPSASSVP) is disordered. Over residues 12-22 (RQDTPSASSVP) the composition is skewed to polar residues. ABC transporter domains lie at 29 to 265 (LEVR…VGRE) and 275 to 515 (VPIG…VMEL). 61-68 (GENGAGKS) lines the ATP pocket.

The protein belongs to the ABC transporter superfamily. Carbohydrate importer 2 (CUT2) (TC 3.A.1.2) family.

It localises to the cell inner membrane. The catalysed reaction is D-ribose(out) + ATP + H2O = D-ribose(in) + ADP + phosphate + H(+). It carries out the reaction D-galactose(out) + ATP + H2O = D-galactose(in) + ADP + phosphate + H(+). Its function is as follows. Part of an ABC transporter complex involved in carbohydrate import. Could be involved in ribose, galactose and/or methyl galactoside import. Responsible for energy coupling to the transport system. The sequence is that of Putative ribose/galactose/methyl galactoside import ATP-binding protein from Ralstonia nicotianae (strain ATCC BAA-1114 / GMI1000) (Ralstonia solanacearum).